The following is a 484-amino-acid chain: UDP-N-acetylmuramate--L-alanine ligase (484 aa).

Position 125–131 (125–131 (GTHGKTT)) interacts with ATP.

Belongs to the MurCDEF family.

Its subcellular location is the cytoplasm. It catalyses the reaction UDP-N-acetyl-alpha-D-muramate + L-alanine + ATP = UDP-N-acetyl-alpha-D-muramoyl-L-alanine + ADP + phosphate + H(+). Its pathway is cell wall biogenesis; peptidoglycan biosynthesis. Its function is as follows. Cell wall formation. In Buchnera aphidicola subsp. Acyrthosiphon pisum (strain 5A), this protein is UDP-N-acetylmuramate--L-alanine ligase.